Consider the following 57-residue polypeptide: Large ribosomal subunit protein uL30 (57 aa).

It belongs to the universal ribosomal protein uL30 family. In terms of assembly, part of the 50S ribosomal subunit.

This chain is Large ribosomal subunit protein uL30, found in Acholeplasma laidlawii (strain PG-8A).